The sequence spans 240 residues: Putative exosome complex component RRP41 (240 aa).

It belongs to the RNase PH family. Component of the RNA exosome complex.

Its subcellular location is the cytoplasm. The protein resides in the nucleus. It localises to the nucleolus. It is found in the nucleoplasm. Its function is as follows. Non-catalytic component of the RNA exosome complex which has 3'-&gt;5' exoribonuclease activity and participates in a multitude of cellular RNA processing and degradation events. This chain is Putative exosome complex component RRP41 (exos-4.1), found in Caenorhabditis elegans.